The sequence spans 583 residues: CD166 antigen (583 aa).

Positions 1–27 are cleaved as a signal peptide; the sequence is MESKGASSCRLLFCLLISATVFRPGLG. Ig-like V-type domains are found at residues 28-120 and 125-234; these read WYTV…TEDN and PTIV…KTIH. The Extracellular portion of the chain corresponds to 28–527; it reads WYTVNSAYGD…NREKVNDQAK (500 aa). 2 disulfide bridges follow: Cys43–Cys113 and Cys157–Cys220. Asn91, Asn95, Asn167, Asn265, Asn306, Asn361, Asn457, Asn480, and Asn499 each carry an N-linked (GlcNAc...) asparagine glycan. 3 Ig-like C2-type domains span residues 245-328, 333-409, and 416-501; these read PTEQ…TAIT, DLSL…ESLT, and PQIK…LNVS. Intrachain disulfides connect Cys270/Cys313, Cys354/Cys392, and Cys435/Cys485. The helical transmembrane segment at 528–549 threads the bilayer; sequence LIVGIVVGLLLAALVAGVVYWL. Residues 550 to 583 are Cytoplasmic-facing; the sequence is YMKKSKTASKHVNKDLGNMEENKKLEENNHKTEA. Positions 562-583 are disordered; it reads NKDLGNMEENKKLEENNHKTEA. Over residues 569–583 the composition is skewed to basic and acidic residues; sequence EENKKLEENNHKTEA.

In terms of assembly, homodimer. Interacts (via extracellular domain) with CD6 (via extracellular domain). Homodimerization and interaction with CD6 involve the same region and cannot occur simultaneously. The affinity for CD6 is much higher than the affinity for self-association. Interacts (via glycosylated extracellular domain) with LGALS1 and LGALS3. Interaction with LGALS1 or LGALS3 inhibits interaction with CD6. Glycosylated. Detected on hematopoietic stem cells derived from umbilical cord blood. Detected on lymph vessel endothelial cells, skin and tonsil. Detected on peripheral blood monocytes. Detected on monocyte-derived dendritic cells (at protein level). Detected at low levels in spleen, placenta, liver. Expressed by activated T-cells, B-cells, monocytes and thymic epithelial cells. Isoform 1 and isoform 3 are detected in vein and artery endothelial cells, astrocytes, keratinocytes and artery smooth muscle cells. Expressed by neurons in the brain. Restricted expression in tumor cell lines. Detected in highly metastasizing melanoma cell lines.

It is found in the cell membrane. The protein localises to the cell projection. It localises to the axon. The protein resides in the dendrite. Its subcellular location is the secreted. Cell adhesion molecule that mediates both heterotypic cell-cell contacts via its interaction with CD6, as well as homotypic cell-cell contacts. Promotes T-cell activation and proliferation via its interactions with CD6. Contributes to the formation and maturation of the immunological synapse via its interactions with CD6. Mediates homotypic interactions with cells that express ALCAM. Acts as a ligand for the LILRB4 receptor, enhancing LILRB4-mediated inhibition of T cell proliferation. Required for normal hematopoietic stem cell engraftment in the bone marrow. Mediates attachment of dendritic cells onto endothelial cells via homotypic interaction. Inhibits endothelial cell migration and promotes endothelial tube formation via homotypic interactions. Required for normal organization of the lymph vessel network. Required for normal hematopoietic stem cell engraftment in the bone marrow. Plays a role in hematopoiesis; required for normal numbers of hematopoietic stem cells in bone marrow. Promotes in vitro osteoblast proliferation and differentiation. Promotes neurite extension, axon growth and axon guidance; axons grow preferentially on surfaces that contain ALCAM. Mediates outgrowth and pathfinding for retinal ganglion cell axons. Its function is as follows. Inhibits activities of membrane-bound isoforms by competing for the same interaction partners. Inhibits cell attachment via homotypic interactions. Promotes endothelial cell migration. Inhibits endothelial cell tube formation. The sequence is that of CD166 antigen (ALCAM) from Homo sapiens (Human).